A 237-amino-acid chain; its full sequence is dTDP-3-amino-3,4,6-trideoxy-alpha-D-glucopyranose N,N-dimethyltransferase (237 aa).

Y14 and R17 together coordinate substrate. S-adenosyl-L-methionine is bound by residues Y21, A46, E67, 89 to 90, and M105; that span reads DM. Residues 145–147, S152, 165–169, and R229 contribute to the substrate site; these read TFA and RVSHS.

The protein belongs to the methyltransferase TylM1/DesVI family. As to quaternary structure, homodimer.

The enzyme catalyses dTDP-3-amino-3,4,6-trideoxy-alpha-D-glucose + 2 S-adenosyl-L-methionine = dTDP-alpha-D-desosamine + 2 S-adenosyl-L-homocysteine + 2 H(+). It functions in the pathway antibiotic biosynthesis. In terms of biological role, S-adenosyl-L-methionine-dependent methyltransferase involved in the biosynthesis of desosamine, found in certain macrolide antibiotics such as erthyromycin, azithromycin, clarithromycin, and methymycin. Catalyzes the last step in the biosynthesis of dTDP-desosamine, i.e. the N,N-dimethylation of the 3-amino group of dTDP-3-amino-3,4,6-trideoxy-alpha-D-glucose. This chain is dTDP-3-amino-3,4,6-trideoxy-alpha-D-glucopyranose N,N-dimethyltransferase, found in Streptomyces venezuelae.